A 509-amino-acid polypeptide reads, in one-letter code: Bestrophin-2a (509 aa).

Residues 1–31 (MTVTYTARVANARFGGFSQLLLLWRGSIYKL) are Cytoplasmic-facing. Alanine 10 contributes to the Ca(2+) binding site. A helical transmembrane segment spans residues 32-51 (LWRELLCFLGFYMALSAAYR). The Extracellular segment spans residues 52–60 (FVLTEGQKR). The helical transmembrane segment at 61–82 (YFEKLVIYCDQYASLIPVSFVL) threads the bilayer. Topologically, residues 83–238 (GFYVTLVVNR…WISVPLVYTQ (156 aa)) are cytoplasmic. Residues 239–255 (VVTIALYSYFLACLIGR) traverse the membrane as a helical segment. Residues 256–274 (QFLDPAQGYKDHDLDLCVP) lie on the Extracellular side of the membrane. The chain crosses the membrane as a helical span at residues 275–288 (IFTLLQFFFYAGWL). Topologically, residues 289 to 509 (KVAEQLINPF…PIGEEEENLA (221 aa)) are cytoplasmic. Ca(2+)-binding residues include glutamine 293, asparagine 296, aspartate 301, and aspartate 304. Residues 454–509 (DPGLPEPEAPPPAGPEPLTLIPGPVEPFSIVTMPGPRGPAPPWLPSPIGEEEENLA) form a disordered region. Composition is skewed to pro residues over residues 457–468 (LPEPEAPPPAGP) and 489–498 (PRGPAPPWLP).

The protein belongs to the anion channel-forming bestrophin (TC 1.A.46) family. Calcium-sensitive chloride channel subfamily. As to quaternary structure, pentamer. Interacts with GLUL; this interaction tethers a fraction of GLUL to the membrane, causing a decrease of cytosolic glutamine synthase (GS) activity and inhibits the chloride channel activity of BEST2 by affecting the gating at the aperture in the absence of intracellular glutamate. As to expression, mainly confined to the retinal pigment epithelium. Expressed in colon.

Its subcellular location is the cell membrane. It is found in the basolateral cell membrane. It carries out the reaction chloride(in) = chloride(out). The catalysed reaction is hydrogencarbonate(in) = hydrogencarbonate(out). It catalyses the reaction L-glutamate(out) = L-glutamate(in). The enzyme catalyses iodide(out) = iodide(in). It carries out the reaction L-glutamine(out) = L-glutamine(in). With respect to regulation, chloride channel activity is allosterically inhibited by GLUL/glutamine synthase (GS) which affects the gating at the aperture in the absence of intracellular glutamate. Inhibitory effect of GLUL is relieved upon increasing of L-glutamate intracellular level. In terms of biological role, ligand-gated anion channel that allows the movement of anions across cell membranes when activated by calcium (Ca2+). Transports a large specter of anions, namely mediates the movement of chloride, L-glutamate and iodide. Calcium-binding triggers the dilation of the aperture, but calcium-dependent gating is only effective when the size of the passing anion is bigger than the closed aperture. Mediates the calcium-activated hydrogencarbonate movement and participates in colonic hydrogencarbonate secretion concomitant with mucin secretion. In non-pigmented epithelium (NPE), mediates the efflux of intracellular L-glutamate; binding of intracellular L-glutamate activates and open both the neck and the aperture of the channel, leading to L-glutamate exit promoting chloride influx movement from the extracellular side in trans. Also exhibits a directional permeability for intracellular glutamine, in a similar manner as for L-glutamate. The chain is Bestrophin-2a from Homo sapiens (Human).